The chain runs to 488 residues: 3-octaprenyl-4-hydroxybenzoate carboxy-lyase (488 aa).

Position 172 (Asn-172) interacts with Mn(2+). Residues 175 to 177 (IYR), 189 to 191 (RWL), and 194 to 195 (RG) contribute to the prenylated FMN site. Glu-238 is a binding site for Mn(2+). Residue Asp-287 is the Proton donor of the active site.

The protein belongs to the UbiD family. Homohexamer. Prenylated FMN is required as a cofactor. The cofactor is Mn(2+).

Its subcellular location is the cell membrane. The enzyme catalyses a 4-hydroxy-3-(all-trans-polyprenyl)benzoate + H(+) = a 2-(all-trans-polyprenyl)phenol + CO2. It functions in the pathway cofactor biosynthesis; ubiquinone biosynthesis. Functionally, catalyzes the decarboxylation of 3-octaprenyl-4-hydroxy benzoate to 2-octaprenylphenol, an intermediate step in ubiquinone biosynthesis. This Pseudomonas putida (strain ATCC 47054 / DSM 6125 / CFBP 8728 / NCIMB 11950 / KT2440) protein is 3-octaprenyl-4-hydroxybenzoate carboxy-lyase.